Reading from the N-terminus, the 103-residue chain is Large ribosomal subunit protein bL21 (103 aa).

This sequence belongs to the bacterial ribosomal protein bL21 family. As to quaternary structure, part of the 50S ribosomal subunit. Contacts protein L20.

Functionally, this protein binds to 23S rRNA in the presence of protein L20. This is Large ribosomal subunit protein bL21 from Acetivibrio thermocellus (strain ATCC 27405 / DSM 1237 / JCM 9322 / NBRC 103400 / NCIMB 10682 / NRRL B-4536 / VPI 7372) (Clostridium thermocellum).